Consider the following 208-residue polypeptide: Large ribosomal subunit protein bL25 (208 aa).

It belongs to the bacterial ribosomal protein bL25 family. CTC subfamily. As to quaternary structure, part of the 50S ribosomal subunit; part of the 5S rRNA/L5/L18/L25 subcomplex. Contacts the 5S rRNA. Binds to the 5S rRNA independently of L5 and L18.

Its function is as follows. This is one of the proteins that binds to the 5S RNA in the ribosome where it forms part of the central protuberance. This is Large ribosomal subunit protein bL25 from Paracoccus denitrificans (strain Pd 1222).